The sequence spans 62 residues: Large ribosomal subunit protein uL29 (62 aa).

It belongs to the universal ribosomal protein uL29 family.

The chain is Large ribosomal subunit protein uL29 from Geotalea daltonii (strain DSM 22248 / JCM 15807 / FRC-32) (Geobacter daltonii).